The chain runs to 1382 residues: Ninein-like protein (1382 aa).

EF-hand domains lie at 7-42 (HYVSQLREVYSSCDTTGTGFLDRQELTQLCLKLHLE) and 41-76 (LEQQLPVLLQTLLGNDHFARVNFEEFKEGFVAVLSS). Residues 144–164 (ASLESVESPKSDEEAESTKEA) are disordered. Ser148 is subject to Phosphoserine. Residues 150 to 164 (ESPKSDEEAESTKEA) show a composition bias toward basic and acidic residues. EF-hand domains lie at 196–231 (TPESQIRGVWEELGVGSSGHLSEQELAVVCQSVGLQ) and 233–268 (LEKEELEDLFNKLDQDGDGKVSLEEFQLGLFSHEPA). Residues Asp246, Asp248, Asp250, Lys252, and Glu257 each coordinate Ca(2+). Coiled-coil stretches lie at residues 384–424 (QELS…MDDC), 484–579 (AGLR…WARL), and 616–699 (IETE…QLQD). Positions 495–497 (KEN) match the KEN box motif. The short motif at 633–641 (RTQLETKVN) is the D-box element. Disordered stretches follow at residues 857–969 (PLAW…ASCR) and 982–1006 (RARSWSRGTQEQASEQQARAEGALE). Residues 991 to 1004 (QEQASEQQARAEGA) are compositionally biased toward low complexity. A coiled-coil region spans residues 1046 to 1375 (ETKIALEREK…RALNKLVSRI (330 aa)).

Interacts with gamma-tubulin and TUBGCP4. Interacts with anaphase promoting complex/cyclosome (APC/C). Interacts with CDC20 and FZR1. Isoform 2 interacts with LCA5 and USH2A. Isoform 2 interacts with DZANK1. In terms of processing, phosphorylated by PLK1 which disrupts its centrosome association and interaction with gamma-tubulin. Ubiquitinated by the APC/C complex leading to its degradation. As to expression, expressed in KYSE-150 esophageal carcinoma, HeLa cervical carcinoma and U2OS osteosarcoma cells. Expression is regulated in a cell cycle-dependent manner and peaks during G2/M phase (at protein level). Expressed in fetal heart, skeletal muscle, liver, lung and cochlea, and in adult brain, testis, kidney and retina.

It localises to the cytoplasm. Its subcellular location is the cytoskeleton. It is found in the microtubule organizing center. The protein localises to the centrosome. In terms of biological role, involved in the microtubule organization in interphase cells. Overexpression induces the fragmentation of the Golgi, and causes lysosomes to disperse toward the cell periphery; it also interferes with mitotic spindle assembly. Involved in vesicle transport in photoreceptor cells. May play a role in ovarian carcinogenesis. This chain is Ninein-like protein (NINL), found in Homo sapiens (Human).